The chain runs to 155 residues: Small ribosomal subunit protein bS6 (155 aa).

The interval 94–155 (VKQEGPLPTP…TPELEEQVKS (62 aa)) is disordered. The span at 103-112 (PRSSNKSSNQ) shows a compositional bias: polar residues. The span at 113–141 (AEKKENENIDSANKSEPKADETDNKKKIT) shows a compositional bias: basic and acidic residues.

Belongs to the bacterial ribosomal protein bS6 family.

In terms of biological role, binds together with bS18 to 16S ribosomal RNA. This Prochlorococcus marinus (strain MIT 9515) protein is Small ribosomal subunit protein bS6.